A 925-amino-acid chain; its full sequence is Aspulvinone E synthetase melA (925 aa).

The adenylation (A) domain stretch occupies residues 11–434; that stretch reads ETAAARNGDG…GGRAKETIII (424 aa). One can recognise a Carrier domain in the interval 564-644; that stretch reads SPKNDFEKGL…ELAAALDNLY (81 aa). S601 carries the post-translational modification O-(pantetheine 4'-phosphoryl)serine. Residues 663 to 923 are thioesterase (TE) domain; that stretch reads PLWLVHPGAG…KILRSALAER (261 aa).

The protein belongs to the NRP synthetase family.

It localises to the cytoplasm. The catalysed reaction is 2 3-(4-hydroxyphenyl)pyruvate + AH2 + 2 ATP + O2 = aspulvinone E + A + 2 AMP + CO2 + 2 diphosphate + H2O + H(+). Functionally, nonribosomal peptide synthase; part of the gene cluster that mediates the biosynthesis of Asp-melanin, a pigment that confers resistance against UV light and hampers phagocytosis by soil amoeba. The nonribosomal peptide synthase melA converts 4-hydroxyphenylpyruvate (4-HPPA) to aspulvinone E. The tyrosinase tyrP then performs hydroxylations of both aromatic moieties of aspulvinone E. The product of tyrP is highly unstable, and, due to the high reactivity of methides and ortho-diquinones, the polymeric Asp-melanin forms spontaneously. The sequence is that of Aspulvinone E synthetase melA from Aspergillus terreus (strain NIH 2624 / FGSC A1156).